The following is a 34-amino-acid chain: Photosystem II reaction center protein M (34 aa).

Residues G7–I27 form a helical membrane-spanning segment.

It belongs to the PsbM family. In terms of assembly, PSII is composed of 1 copy each of membrane proteins PsbA, PsbB, PsbC, PsbD, PsbE, PsbF, PsbH, PsbI, PsbJ, PsbK, PsbL, PsbM, PsbT, PsbX, PsbY, Psb30/Ycf12, peripheral proteins PsbO, CyanoQ (PsbQ), PsbU, PsbV and a large number of cofactors. It forms dimeric complexes.

It localises to the cellular thylakoid membrane. In terms of biological role, one of the components of the core complex of photosystem II (PSII). PSII is a light-driven water:plastoquinone oxidoreductase that uses light energy to abstract electrons from H(2)O, generating O(2) and a proton gradient subsequently used for ATP formation. It consists of a core antenna complex that captures photons, and an electron transfer chain that converts photonic excitation into a charge separation. This subunit is found at the monomer-monomer interface. The chain is Photosystem II reaction center protein M from Prochlorococcus marinus (strain MIT 9303).